The chain runs to 433 residues: Dihydroorotase (433 aa).

The Zn(2+) site is built by histidine 63 and histidine 65. Residues histidine 65–arginine 67 and asparagine 97 each bind substrate. Zn(2+) is bound by residues aspartate 155, histidine 182, and histidine 235. Residue asparagine 283 coordinates substrate. Zn(2+) is bound at residue aspartate 310. Residue aspartate 310 is part of the active site. Histidine 314 contacts substrate.

This sequence belongs to the metallo-dependent hydrolases superfamily. DHOase family. Class I DHOase subfamily. Zn(2+) serves as cofactor.

The catalysed reaction is (S)-dihydroorotate + H2O = N-carbamoyl-L-aspartate + H(+). It participates in pyrimidine metabolism; UMP biosynthesis via de novo pathway; (S)-dihydroorotate from bicarbonate: step 3/3. Functionally, catalyzes the reversible cyclization of carbamoyl aspartate to dihydroorotate. The chain is Dihydroorotase from Anaeromyxobacter dehalogenans (strain 2CP-C).